Consider the following 705-residue polypeptide: Ribosomal RNA large subunit methyltransferase K/L (705 aa).

Residues 42–154 (LAQKVCLSTR…RYGVSMYIDY (113 aa)) form the THUMP domain.

It belongs to the methyltransferase superfamily. RlmKL family.

The protein localises to the cytoplasm. The catalysed reaction is guanosine(2445) in 23S rRNA + S-adenosyl-L-methionine = N(2)-methylguanosine(2445) in 23S rRNA + S-adenosyl-L-homocysteine + H(+). It catalyses the reaction guanosine(2069) in 23S rRNA + S-adenosyl-L-methionine = N(2)-methylguanosine(2069) in 23S rRNA + S-adenosyl-L-homocysteine + H(+). Functionally, specifically methylates the guanine in position 2445 (m2G2445) and the guanine in position 2069 (m7G2069) of 23S rRNA. This chain is Ribosomal RNA large subunit methyltransferase K/L, found in Pseudoalteromonas translucida (strain TAC 125).